A 144-amino-acid chain; its full sequence is Bacilliredoxin BC_2157 (144 aa).

It belongs to the bacilliredoxin family.

This Bacillus cereus (strain ATCC 14579 / DSM 31 / CCUG 7414 / JCM 2152 / NBRC 15305 / NCIMB 9373 / NCTC 2599 / NRRL B-3711) protein is Bacilliredoxin BC_2157.